The sequence spans 177 residues: Probable DNA-directed RNA polymerase subunit delta (177 aa).

The HTH HARE-type domain maps to 14 to 81; that stretch reads CSMIEVVHSV…GENRWGLRSW (68 aa). The tract at residues 93–177 is disordered; sequence PQPKPKKKRK…ETEEEEEEEL (85 aa). A compositionally biased stretch (acidic residues) spans 106 to 177; the sequence is DGFDDYIEED…ETEEEEEEEL (72 aa).

It belongs to the RpoE family. As to quaternary structure, RNAP is composed of a core of 2 alpha, a beta and a beta' subunits. The core is associated with a delta subunit and one of several sigma factors.

Its function is as follows. Participates in both the initiation and recycling phases of transcription. In the presence of the delta subunit, RNAP displays an increased specificity of transcription, a decreased affinity for nucleic acids, and an increased efficiency of RNA synthesis because of enhanced recycling. The polypeptide is Probable DNA-directed RNA polymerase subunit delta (Bacillus cereus (strain AH187)).